A 313-amino-acid chain; its full sequence is Porphobilinogen deaminase (313 aa).

Cys-241 bears the S-(dipyrrolylmethanemethyl)cysteine mark.

Belongs to the HMBS family. Monomer. It depends on dipyrromethane as a cofactor.

The enzyme catalyses 4 porphobilinogen + H2O = hydroxymethylbilane + 4 NH4(+). Its pathway is porphyrin-containing compound metabolism; protoporphyrin-IX biosynthesis; coproporphyrinogen-III from 5-aminolevulinate: step 2/4. Tetrapolymerization of the monopyrrole PBG into the hydroxymethylbilane pre-uroporphyrinogen in several discrete steps. The chain is Porphobilinogen deaminase from Idiomarina loihiensis (strain ATCC BAA-735 / DSM 15497 / L2-TR).